We begin with the raw amino-acid sequence, 191 residues long: Accessory gene regulator protein B (191 aa).

Helical transmembrane passes span Ile45–Leu65, Ser81–Ile101, Ile108–Ile128, Ile144–Phe164, and Asn165–Pro185.

This sequence belongs to the AgrB family.

Its subcellular location is the cell membrane. In terms of biological role, essential for the production of a quorum sensing system signal molecule, the autoinducing peptide (AIP). This quorum sensing system is responsible for the regulation of the expression of virulence factor genes. Involved in the proteolytic processing of AgrD, the precursor of AIP. The chain is Accessory gene regulator protein B from Staphylococcus carnosus (strain TM300).